The sequence spans 274 residues: RNA polymerase sigma factor SigI4 (274 aa).

Positions 87 to 100 (EEYSVGLMAFNEAI) match the Polymerase core binding motif. The H-T-H motif DNA-binding region spans 226-245 (LSELMGLVNVHRKTVERNRK).

It belongs to the sigma-70 factor family. SigI subfamily. Interacts with RsgI4.

The protein resides in the cytoplasm. Negatively regulated by the anti-sigma-I factor RsgI4. Binding of the polysaccharide substrate to RsgI4 may lead to the release and activation of SigI4. Sigma factors are initiation factors that promote the attachment of RNA polymerase to specific initiation sites and are then released. This sigma factor is involved in regulation of cellulosomal genes via an external polysaccharide-sensing mechanism. This Acetivibrio thermocellus (strain ATCC 27405 / DSM 1237 / JCM 9322 / NBRC 103400 / NCIMB 10682 / NRRL B-4536 / VPI 7372) (Clostridium thermocellum) protein is RNA polymerase sigma factor SigI4.